Reading from the N-terminus, the 358-residue chain is 3-dehydroquinate synthase (358 aa).

Residues 70–75 (DGEKFK), 104–108 (GVVGD), 128–129 (TT), K141, K150, and 168–171 (CLQT) each bind NAD(+). Residues E183, H246, and H263 each contribute to the Zn(2+) site.

It belongs to the sugar phosphate cyclases superfamily. Dehydroquinate synthase family. Co(2+) is required as a cofactor. Requires Zn(2+) as cofactor. The cofactor is NAD(+).

Its subcellular location is the cytoplasm. It catalyses the reaction 7-phospho-2-dehydro-3-deoxy-D-arabino-heptonate = 3-dehydroquinate + phosphate. Its pathway is metabolic intermediate biosynthesis; chorismate biosynthesis; chorismate from D-erythrose 4-phosphate and phosphoenolpyruvate: step 2/7. In terms of biological role, catalyzes the conversion of 3-deoxy-D-arabino-heptulosonate 7-phosphate (DAHP) to dehydroquinate (DHQ). The sequence is that of 3-dehydroquinate synthase from Shewanella frigidimarina (strain NCIMB 400).